The sequence spans 319 residues: Acetyl-coenzyme A carboxylase carboxyl transferase subunit alpha (319 aa).

Positions 35 to 296 (NLDEEVQRLR…KAQLLADLND (262 aa)) constitute a CoA carboxyltransferase C-terminal domain.

Belongs to the AccA family. In terms of assembly, acetyl-CoA carboxylase is a heterohexamer composed of biotin carboxyl carrier protein (AccB), biotin carboxylase (AccC) and two subunits each of ACCase subunit alpha (AccA) and ACCase subunit beta (AccD).

It is found in the cytoplasm. It catalyses the reaction N(6)-carboxybiotinyl-L-lysyl-[protein] + acetyl-CoA = N(6)-biotinyl-L-lysyl-[protein] + malonyl-CoA. The protein operates within lipid metabolism; malonyl-CoA biosynthesis; malonyl-CoA from acetyl-CoA: step 1/1. In terms of biological role, component of the acetyl coenzyme A carboxylase (ACC) complex. First, biotin carboxylase catalyzes the carboxylation of biotin on its carrier protein (BCCP) and then the CO(2) group is transferred by the carboxyltransferase to acetyl-CoA to form malonyl-CoA. The sequence is that of Acetyl-coenzyme A carboxylase carboxyl transferase subunit alpha from Yersinia pseudotuberculosis serotype O:3 (strain YPIII).